The primary structure comprises 303 residues: Succinate--CoA ligase [ADP-forming] subunit alpha (303 aa).

Residues 20 to 23, Lys-46, and 108 to 110 contribute to the CoA site; these read TGSE and ITE. Tyr-173 is a substrate binding site. The Tele-phosphohistidine intermediate role is filled by His-259.

This sequence belongs to the succinate/malate CoA ligase alpha subunit family. In terms of assembly, heterotetramer of two alpha and two beta subunits.

The catalysed reaction is succinate + ATP + CoA = succinyl-CoA + ADP + phosphate. It carries out the reaction GTP + succinate + CoA = succinyl-CoA + GDP + phosphate. The protein operates within carbohydrate metabolism; tricarboxylic acid cycle; succinate from succinyl-CoA (ligase route): step 1/1. Functionally, succinyl-CoA synthetase functions in the citric acid cycle (TCA), coupling the hydrolysis of succinyl-CoA to the synthesis of either ATP or GTP and thus represents the only step of substrate-level phosphorylation in the TCA. The alpha subunit of the enzyme binds the substrates coenzyme A and phosphate, while succinate binding and nucleotide specificity is provided by the beta subunit. This Mycobacterium bovis (strain ATCC BAA-935 / AF2122/97) protein is Succinate--CoA ligase [ADP-forming] subunit alpha.